Here is a 129-residue protein sequence, read N- to C-terminus: NADH-quinone oxidoreductase subunit A (129 aa).

3 helical membrane passes run 14–34 (LAIH…VAAV), 67–87 (FLIA…FAWA), and 97–117 (GLIE…YLWI).

Belongs to the complex I subunit 3 family. As to quaternary structure, NDH-1 is composed of 14 different subunits. Subunits NuoA, H, J, K, L, M, N constitute the membrane sector of the complex.

The protein localises to the cell inner membrane. The enzyme catalyses a quinone + NADH + 5 H(+)(in) = a quinol + NAD(+) + 4 H(+)(out). NDH-1 shuttles electrons from NADH, via FMN and iron-sulfur (Fe-S) centers, to quinones in the respiratory chain. The immediate electron acceptor for the enzyme in this species is believed to be ubiquinone. Couples the redox reaction to proton translocation (for every two electrons transferred, four hydrogen ions are translocated across the cytoplasmic membrane), and thus conserves the redox energy in a proton gradient. In Rhodopseudomonas palustris (strain BisB18), this protein is NADH-quinone oxidoreductase subunit A.